The following is a 340-amino-acid chain: Replication factor C subunit 3 (340 aa).

Serine 2 carries the N-acetylserine modification. Residues 16–19, arginine 20, tyrosine 28, 53–61, asparagine 148, and arginine 206 contribute to the ATP site; these read VEKY and GPPGTGKTS.

The protein belongs to the activator 1 small subunits family. As to quaternary structure, replication factor C (RFC) is a heteropentamer of subunits RFC1, RFC2, RFC3, RFC4 and RFC5 and forms a complex with POL30/PCNA in the presence of ATP. Component of the RAD24-RFC complex which consists of RAD14, RFC2, RFC3, RFC4 and RFC5 and associates with the checkpoint clamp DDC1:MEC3:RAD17 complex. Component of the ELG1-RFC complex which consists of ELG1, RFC2, RFC3, RFC4 and RFC5. Component of the CTF18-RFC complex, which consists of CTF18, CTF8, DCC1, RFC2, RFC3, RFC4 and RFC5. RFC3 interacts with ECO1 and POL30/PCNA.

It localises to the nucleus. In terms of biological role, component of ATP-dependent clamp loader (RFC and RFC-like) complexes for DNA clamps, such as the POL30/PCNA homotrimer and the checkpoint clamp DDC1:MEC3:RAD17 complex. During a clamp loading circle, the RFC:clamp complex binds to DNA and the recognition of the double-stranded/single-stranded junction stimulates ATP hydrolysis by RFC. The complex presumably provides bipartite ATP sites in which one subunit supplies a catalytic site for hydrolysis of ATP bound to the neighboring subunit. Dissociation of RFC from the clamp leaves the clamp encircling DNA. Component of the replication factor C (RFC or activator 1) complex which loads POL30/PCNA and acts during elongation of primed DNA templates by DNA polymerase delta and epsilon. RFC has an essential but redundant activity in sister chromatid cohesion establishment. Component of the RFC-like complex CTF18-RFC which is required for efficient establishment of chromosome cohesion during S-phase and may load or unload POL30/PCNA. Component of the RFC-like RAD24-RFC complex which loads the checkpoint clamp DDC1:MEC3:RAD17 complex and is involved in DNA repair pathways. Component of the RFC-like ELG1-RFC complex which appears to have a role in DNA replication, replication fork re-start, recombination and repair. RFC3 supplies a catalytic site to the ATP site of RFC4. This Saccharomyces cerevisiae (strain ATCC 204508 / S288c) (Baker's yeast) protein is Replication factor C subunit 3 (RFC3).